A 315-amino-acid polypeptide reads, in one-letter code: Protein ADP-ribosyltransferase (315 aa).

Positions 13 to 299 constitute a Deacetylase sirtuin-type domain; the sequence is LMDEKTKQAE…TTALRNDSTT (287 aa). Residues A40, 123–126, and Q143 each bind NAD(+); that span reads TNAD. Zn(2+) is bound by residues C151, C155, C186, and C189. NAD(+) contacts are provided by residues 238-240, N264, Y268, and I285; that span reads YTT.

It belongs to the sirtuin family. Class M subfamily. Zn(2+) is required as a cofactor.

The enzyme catalyses L-aspartyl-[protein] + NAD(+) = 4-O-(ADP-D-ribosyl)-L-aspartyl-[protein] + nicotinamide. With respect to regulation, is inhibited by Tenovin-6 in vitro, but not by nicotinamide. Functionally, catalyzes specifically the mono-ADP-ribosylation of GcvH-L (SAV0324). This activity is dependent on prior lipoylation of the target protein. May be involved in the modulation of the response to host-derived oxidative stress. In contrast to other sirtuin classes, lacks protein deacylase activity, being unable to catalyze delipoylation, debiotinylation, deacetylation and desuccinylation of proteins. The polypeptide is Protein ADP-ribosyltransferase (Staphylococcus aureus (strain Mu50 / ATCC 700699)).